Consider the following 284-residue polypeptide: Undecaprenyl-diphosphatase (284 aa).

The next 8 helical transmembrane spans lie at 7-27 (IILG…TGHL), 44-64 (EMFD…LYFH), 90-110 (LWLK…PLND), 116-136 (FYHF…FIVI), 167-187 (VLSL…ALLI), 197-217 (FTFF…ILHF), 229-249 (FGVL…AIKF), and 259-279 (FTFF…YAAF).

This sequence belongs to the UppP family.

It localises to the cell membrane. It carries out the reaction di-trans,octa-cis-undecaprenyl diphosphate + H2O = di-trans,octa-cis-undecaprenyl phosphate + phosphate + H(+). Catalyzes the dephosphorylation of undecaprenyl diphosphate (UPP). Confers resistance to bacitracin. The sequence is that of Undecaprenyl-diphosphatase from Lactococcus lactis subsp. cremoris (strain SK11).